Consider the following 719-residue polypeptide: Pesticidal crystal protein Cry1Ib (719 aa).

Belongs to the delta endotoxin family.

Functionally, promotes colloidosmotic lysis by binding to the midgut epithelial cells of certain coleopteran and lepidopteran species. Active on Plutella xylostella but not on Bombyx mori. The sequence is that of Pesticidal crystal protein Cry1Ib (cry1Ib) from Bacillus thuringiensis subsp. entomocidus.